The following is a 90-amino-acid chain: Small ribosomal subunit protein bS20 (90 aa).

Residues 1 to 11 (MANIKSSEKDI) show a composition bias toward basic and acidic residues. Disordered stretches follow at residues 1–29 (MANI…SRLR) and 69–90 (SKNA…SAAA).

It belongs to the bacterial ribosomal protein bS20 family.

In terms of biological role, binds directly to 16S ribosomal RNA. This Leptospira borgpetersenii serovar Hardjo-bovis (strain L550) protein is Small ribosomal subunit protein bS20.